A 554-amino-acid chain; its full sequence is Chaperonin GroEL (554 aa).

ATP is bound by residues 30-33 (TLGP), Lys-51, 87-91 (DGTTT), Gly-415, 478-480 (DAA), and Asp-494.

The protein belongs to the chaperonin (HSP60) family. Forms a cylinder of 14 subunits composed of two heptameric rings stacked back-to-back. Interacts with the co-chaperonin GroES.

The protein resides in the cytoplasm. The enzyme catalyses ATP + H2O + a folded polypeptide = ADP + phosphate + an unfolded polypeptide.. In terms of biological role, together with its co-chaperonin GroES, plays an essential role in assisting protein folding. The GroEL-GroES system forms a nano-cage that allows encapsulation of the non-native substrate proteins and provides a physical environment optimized to promote and accelerate protein folding. This Pelobacter propionicus (strain DSM 2379 / NBRC 103807 / OttBd1) protein is Chaperonin GroEL.